We begin with the raw amino-acid sequence, 315 residues long: Thioredoxin reductase (315 aa).

Residue 34–41 (EGQKVGGQ) participates in FAD binding. An intrachain disulfide couples C134 to C137. 282 to 291 (DIRVKSLRQV) lines the FAD pocket.

The protein belongs to the class-II pyridine nucleotide-disulfide oxidoreductase family. Homodimer. It depends on FAD as a cofactor.

Its subcellular location is the cytoplasm. The enzyme catalyses [thioredoxin]-dithiol + NADP(+) = [thioredoxin]-disulfide + NADPH + H(+). In Peptoclostridium acidaminophilum (Eubacterium acidaminophilum), this protein is Thioredoxin reductase (trxB).